Consider the following 235-residue polypeptide: MSLLWQARFFTTVNHLRDLPKTQVPEIAFAGRSNAGKSTAINILCNQKKLAFASKTPGRTQHINYFSIGGAHVGQHRKDETKVDEIRALLVDLPGYGYAEVSGSAKLHWQELLGDYVQRREQLAALVLIVDSRRPFTELDIQMLEWFAPTGKPIHCLLTKSDKLNRNDAANALRTARTILGSYVDENGQPFPFTAQMFSALKRSGLDEANDKIIELLGLNEAPQEESNGPAANDV.

One can recognise an EngB-type G domain in the interval 23–219 (QVPEIAFAGR…NDKIIELLGL (197 aa)). GTP is bound by residues 31-38 (GRSNAGKS), 58-62 (GRTQH), 92-95 (DLPG), 159-162 (TKSD), and 193-200 (FTAQMFSA). Mg(2+)-binding residues include Ser38 and Thr60.

This sequence belongs to the TRAFAC class TrmE-Era-EngA-EngB-Septin-like GTPase superfamily. EngB GTPase family. It depends on Mg(2+) as a cofactor.

Necessary for normal cell division and for the maintenance of normal septation. The polypeptide is Probable GTP-binding protein EngB (Janthinobacterium sp. (strain Marseille) (Minibacterium massiliensis)).